Reading from the N-terminus, the 239-residue chain is ATP synthase subunit a (239 aa).

Transmembrane regions (helical) follow at residues 31–51 (FLLQPHVTYTWVVMLVLLGLG), 91–111 (VFPLIASLGMFILFSNYLGMI), 125–145 (AACALISVVFTHVIGIKFHGV), 151–171 (FMGPVWWLTPLIMPIEIIGHI), 194–214 (ILFFLAGFYLAPLPMMFLGLF), and 215–235 (TGFIQAFIFCLLSMMYFAGAI).

It belongs to the ATPase A chain family. In terms of assembly, F-type ATPases have 2 components, CF(1) - the catalytic core - and CF(0) - the membrane proton channel. CF(1) has five subunits: alpha(3), beta(3), gamma(1), delta(1), epsilon(1). CF(0) has three main subunits: a(1), b(2) and c(9-12). The alpha and beta chains form an alternating ring which encloses part of the gamma chain. CF(1) is attached to CF(0) by a central stalk formed by the gamma and epsilon chains, while a peripheral stalk is formed by the delta and b chains.

It is found in the cell inner membrane. Its function is as follows. Key component of the proton channel; it plays a direct role in the translocation of protons across the membrane. The sequence is that of ATP synthase subunit a from Syntrophobacter fumaroxidans (strain DSM 10017 / MPOB).